Reading from the N-terminus, the 259-residue chain is Ribosomal RNA small subunit methyltransferase A (259 aa).

S-adenosyl-L-methionine is bound by residues Asn15, Leu17, Gly41, Glu62, Asp86, and Asn105.

This sequence belongs to the class I-like SAM-binding methyltransferase superfamily. rRNA adenine N(6)-methyltransferase family. RsmA subfamily.

Its subcellular location is the cytoplasm. The enzyme catalyses adenosine(1518)/adenosine(1519) in 16S rRNA + 4 S-adenosyl-L-methionine = N(6)-dimethyladenosine(1518)/N(6)-dimethyladenosine(1519) in 16S rRNA + 4 S-adenosyl-L-homocysteine + 4 H(+). Its function is as follows. Specifically dimethylates two adjacent adenosines (A1518 and A1519) in the loop of a conserved hairpin near the 3'-end of 16S rRNA in the 30S particle. May play a critical role in biogenesis of 30S subunits. This Mycoplasmopsis synoviae (strain 53) (Mycoplasma synoviae) protein is Ribosomal RNA small subunit methyltransferase A.